Consider the following 76-residue polypeptide: ATP synthase subunit 9, mitochondrial (76 aa).

The next 2 helical transmembrane spans lie at 10 to 30 (IGAG…AIVF) and 52 to 72 (ILGF…SFLL).

Belongs to the ATPase C chain family. In terms of assembly, F-type ATPases have 2 components, CF(1) - the catalytic core - and CF(0) - the membrane proton channel. CF(1) has five subunits: alpha(3), beta(3), gamma(1), delta(1), epsilon(1). CF(0) has three main subunits: a, b and c.

The protein localises to the mitochondrion membrane. Its function is as follows. Mitochondrial membrane ATP synthase (F(1)F(0) ATP synthase or Complex V) produces ATP from ADP in the presence of a proton gradient across the membrane which is generated by electron transport complexes of the respiratory chain. F-type ATPases consist of two structural domains, F(1) - containing the extramembraneous catalytic core and F(0) - containing the membrane proton channel, linked together by a central stalk and a peripheral stalk. During catalysis, ATP synthesis in the catalytic domain of F(1) is coupled via a rotary mechanism of the central stalk subunits to proton translocation. Part of the complex F(0) domain. A homomeric c-ring of probably 10 subunits is part of the complex rotary element. The polypeptide is ATP synthase subunit 9, mitochondrial (ATP9) (Kluyveromyces lactis (strain ATCC 8585 / CBS 2359 / DSM 70799 / NBRC 1267 / NRRL Y-1140 / WM37) (Yeast)).